The primary structure comprises 195 residues: Glycerol-3-phosphate acyltransferase (195 aa).

6 consecutive transmembrane segments (helical) span residues 2-22, 54-74, 80-100, 107-127, 132-152, and 155-175; these read IFFS…SSAI, IAIS…WLGY, PIFL…PIFF, GVAT…IVMI, LTVL…FIIP, and AWHF…LVVI.

The protein belongs to the PlsY family. In terms of assembly, probably interacts with PlsX.

It localises to the cell inner membrane. It carries out the reaction an acyl phosphate + sn-glycerol 3-phosphate = a 1-acyl-sn-glycero-3-phosphate + phosphate. It functions in the pathway lipid metabolism; phospholipid metabolism. Functionally, catalyzes the transfer of an acyl group from acyl-phosphate (acyl-PO(4)) to glycerol-3-phosphate (G3P) to form lysophosphatidic acid (LPA). This enzyme utilizes acyl-phosphate as fatty acyl donor, but not acyl-CoA or acyl-ACP. This Blochmanniella pennsylvanica (strain BPEN) protein is Glycerol-3-phosphate acyltransferase.